A 449-amino-acid chain; its full sequence is Methionine aminopeptidase 2 (449 aa).

The interval 1 to 91 (MAAQAAPELA…PRIPLTTLFP (91 aa)) is disordered. Acidic residues predominate over residues 34 to 50 (EEAENEGDSDDDRDDEQ). Residues 61 to 75 (KKKKKKRPKKKKKTA) are compositionally biased toward basic residues. His199 contacts substrate. Residues Asp219, Asp230, and His299 each coordinate a divalent metal cation. His307 contributes to the substrate binding site. A divalent metal cation is bound by residues Glu335 and Glu430.

Belongs to the peptidase M24A family. Methionine aminopeptidase eukaryotic type 2 subfamily. The cofactor is Co(2+). It depends on Zn(2+) as a cofactor. Requires Mn(2+) as cofactor. Fe(2+) is required as a cofactor.

It is found in the cytoplasm. The catalysed reaction is Release of N-terminal amino acids, preferentially methionine, from peptides and arylamides.. Functionally, cotranslationally removes the N-terminal methionine from nascent proteins. The N-terminal methionine is often cleaved when the second residue in the primary sequence is small and uncharged (Met-Ala-, Cys, Gly, Pro, Ser, Thr, or Val). The chain is Methionine aminopeptidase 2 from Arthroderma benhamiae (strain ATCC MYA-4681 / CBS 112371) (Trichophyton mentagrophytes).